A 246-amino-acid polypeptide reads, in one-letter code: MALLRGVWGVLNALGKSGADLCAGCGSRLRYPFSFAYVPKWFSSSLSGYPKKPMTSYVRFSKEQLPIFKAQNPDAKNSELIKKIAKLWRELPDSEKKIYEDAYRADWQVYKEEINRIQEQLTPSQMVSLEKEIMQKRLKKKALIKKRELTMLGKPKRPRSAYNIFIAERFQEARDGTSQVKLKAINENWKNLSNSQKQVYIQLAKDDKIRYYNEMKSWEEQMMEVGREDLIRRSIKYPAKNDPEKF.

The transit peptide at M1–F42 directs the protein to the mitochondrion. The segment at residues P50–Q118 is a DNA-binding region (HMG box 1). S56 and S61 each carry phosphoserine; by PKA. The residue at position 122 (T122) is a Phosphothreonine. The segment at residues P155–E219 is a DNA-binding region (HMG box 2). S160 carries the phosphoserine; by PKA modification. Phosphoserine occurs at positions 193 and 195.

In terms of assembly, monomer; binds DNA as a monomer. Homodimer. Component of the mitochondrial transcription initiation complex, composed at least of TFB2M, TFAM and POLRMT. In this complex TFAM recruits POLRMT to the promoter whereas TFB2M induces structural changes in POLRMT to enable promoter opening and trapping of the DNA non-template strand. Upon metabolic stress, forms a complex composed of FOXO3, SIRT3, TFAM and POLRMT. Interacts with TFB1M and TFB2M. Interacts with CLPX; this enhances DNA-binding. Post-translationally, phosphorylation by PKA within the HMG box 1 impairs DNA binding and promotes degradation by the AAA+ Lon protease.

It localises to the mitochondrion. It is found in the mitochondrion matrix. The protein resides in the mitochondrion nucleoid. In terms of biological role, binds to the mitochondrial light strand promoter and functions in mitochondrial transcription regulation. Component of the mitochondrial transcription initiation complex, composed at least of TFB2M, TFAM and POLRMT that is required for basal transcription of mitochondrial DNA. In this complex, TFAM recruits POLRMT to a specific promoter whereas TFB2M induces structural changes in POLRMT to enable promoter opening and trapping of the DNA non-template strand. Required for accurate and efficient promoter recognition by the mitochondrial RNA polymerase. Promotes transcription initiation from the HSP1 and the light strand promoter by binding immediately upstream of transcriptional start sites. Is able to unwind DNA. Bends the mitochondrial light strand promoter DNA into a U-turn shape via its HMG boxes. Required for maintenance of normal levels of mitochondrial DNA. May play a role in organizing and compacting mitochondrial DNA. This Bos taurus (Bovine) protein is Transcription factor A, mitochondrial.